The primary structure comprises 453 residues: Ribosomal protein uS12 methylthiotransferase RimO (453 aa).

The MTTase N-terminal domain occupies 5–120 (PKVGFVSLGC…VMQAVHSHLP (116 aa)). [4Fe-4S] cluster-binding residues include C14, C50, C79, C151, C155, and C158. The Radical SAM core domain maps to 137–382 (LTPRHYAYLK…MEVAEEVSAN (246 aa)). The TRAM domain maps to 385–453 (QRKIGKTLKV…ADGHDLWGEV (69 aa)).

It belongs to the methylthiotransferase family. RimO subfamily. It depends on [4Fe-4S] cluster as a cofactor.

It localises to the cytoplasm. The catalysed reaction is L-aspartate(89)-[ribosomal protein uS12]-hydrogen + (sulfur carrier)-SH + AH2 + 2 S-adenosyl-L-methionine = 3-methylsulfanyl-L-aspartate(89)-[ribosomal protein uS12]-hydrogen + (sulfur carrier)-H + 5'-deoxyadenosine + L-methionine + A + S-adenosyl-L-homocysteine + 2 H(+). Functionally, catalyzes the methylthiolation of an aspartic acid residue of ribosomal protein uS12. This chain is Ribosomal protein uS12 methylthiotransferase RimO, found in Burkholderia orbicola (strain MC0-3).